The sequence spans 166 residues: 16S rRNA aminocarboxypropyltransferase (166 aa).

5 residues coordinate S-adenosyl-L-methionine: threonine 17, isoleucine 62, leucine 84, tyrosine 99, and serine 103.

The protein belongs to the TDD superfamily. TSR3 family.

The protein resides in the cytoplasm. It catalyses the reaction an N(1)-methylpseudouridine in rRNA + S-adenosyl-L-methionine = N(1)-methyl-N(3)-[(3S)-3-amino-3-carboxypropyl]pseudouridine in rRNA + S-methyl-5'-thioadenosine + H(+). Aminocarboxypropyltransferase that catalyzes the aminocarboxypropyl transfer on pseudouridine corresponding to position 914 in M.jannaschii 16S rRNA. It constitutes the last step in biosynthesis of the hypermodified N1-methyl-N3-(3-amino-3-carboxypropyl) pseudouridine (m1acp3-Psi). The polypeptide is 16S rRNA aminocarboxypropyltransferase (Saccharolobus islandicus (strain M.16.27) (Sulfolobus islandicus)).